A 341-amino-acid chain; its full sequence is Aspartate carbamoyltransferase catalytic subunit (341 aa).

Carbamoyl phosphate-binding residues include Arg-89 and Thr-90. Position 117 (Lys-117) interacts with L-aspartate. Carbamoyl phosphate is bound by residues Arg-139, His-169, and Gln-172. L-aspartate is bound by residues Arg-202 and Arg-257. Carbamoyl phosphate is bound by residues Gly-298 and Pro-299.

It belongs to the aspartate/ornithine carbamoyltransferase superfamily. ATCase family. As to quaternary structure, heterododecamer (2C3:3R2) of six catalytic PyrB chains organized as two trimers (C3), and six regulatory PyrI chains organized as three dimers (R2).

The catalysed reaction is carbamoyl phosphate + L-aspartate = N-carbamoyl-L-aspartate + phosphate + H(+). The protein operates within pyrimidine metabolism; UMP biosynthesis via de novo pathway; (S)-dihydroorotate from bicarbonate: step 2/3. In terms of biological role, catalyzes the condensation of carbamoyl phosphate and aspartate to form carbamoyl aspartate and inorganic phosphate, the committed step in the de novo pyrimidine nucleotide biosynthesis pathway. The protein is Aspartate carbamoyltransferase catalytic subunit of Paraburkholderia xenovorans (strain LB400).